A 303-amino-acid polypeptide reads, in one-letter code: Uricase (303 aa).

At Ala-2 the chain carries N-acetylalanine. N6-acetyllysine; alternate occurs at positions 10 and 23. An N6-succinyllysine; alternate mark is found at Lys-10 and Lys-23. The active-site Charge relay system is Lys-23. Lys-27 and Lys-36 each carry N6-acetyllysine. Phosphoserine is present on residues Ser-39 and Ser-63. The active-site Charge relay system is the Thr-68. Residues Thr-68 and Asp-69 each contribute to the urate site. Lys-118, Lys-122, and Lys-164 each carry N6-acetyllysine. Urate is bound at residue Phe-170. N6-acetyllysine occurs at positions 175 and 185. Residue Arg-187 coordinates urate. Lys-220 bears the N6-acetyllysine; alternate mark. Lys-220 is modified (N6-succinyllysine; alternate). Ser-231 is modified (phosphoserine). Urate contacts are provided by Val-234, Gln-235, and Asn-261. Catalysis depends on His-263, which acts as the Charge relay system. N6-acetyllysine is present on Lys-277. At Tyr-288 the chain carries Phosphotyrosine. A Microbody targeting signal motif is present at residues 301–303 (SRL).

This sequence belongs to the uricase family. Expressed in liver. Not detected in other tissues tested.

It localises to the peroxisome. It catalyses the reaction urate + O2 + H2O = 5-hydroxyisourate + H2O2. Its pathway is purine metabolism; urate degradation; (S)-allantoin from urate: step 1/3. Competitively inhibited by xanthine. Its function is as follows. Catalyzes the oxidation of uric acid to 5-hydroxyisourate, which is further processed to form (S)-allantoin. The sequence is that of Uricase (Uox) from Rattus norvegicus (Rat).